We begin with the raw amino-acid sequence, 423 residues long: Adenylosuccinate synthetase (423 aa).

Residues 12–18 and 40–42 contribute to the GTP site; these read GDEGKGK and GHT. The active-site Proton acceptor is aspartate 13. Mg(2+)-binding residues include aspartate 13 and glycine 40. IMP-binding positions include 13 to 16, 38 to 41, threonine 129, arginine 143, glutamine 224, threonine 239, and arginine 303; these read DEGK and NAGH. Residue histidine 41 is the Proton donor of the active site. 299–305 contacts substrate; the sequence is ATTGRKR. GTP is bound by residues arginine 305, 331–333, and 412–414; these read KGD and SVG.

It belongs to the adenylosuccinate synthetase family. Homodimer. Mg(2+) is required as a cofactor.

The protein resides in the cytoplasm. It catalyses the reaction IMP + L-aspartate + GTP = N(6)-(1,2-dicarboxyethyl)-AMP + GDP + phosphate + 2 H(+). The protein operates within purine metabolism; AMP biosynthesis via de novo pathway; AMP from IMP: step 1/2. Functionally, plays an important role in the de novo pathway of purine nucleotide biosynthesis. Catalyzes the first committed step in the biosynthesis of AMP from IMP. In Christiangramia forsetii (strain DSM 17595 / CGMCC 1.15422 / KT0803) (Gramella forsetii), this protein is Adenylosuccinate synthetase.